The primary structure comprises 448 residues: Signal recognition particle protein (448 aa).

GTP-binding positions include 101-108, 182-186, and 240-243; these read GLQGSGKT, DSAGR, and SKFD.

This sequence belongs to the GTP-binding SRP family. SRP54 subfamily. Part of the signal recognition particle protein translocation system, which is composed of SRP and FtsY. SRP is a ribonucleoprotein composed of Ffh and a 4.5S RNA molecule.

The protein resides in the cytoplasm. It carries out the reaction GTP + H2O = GDP + phosphate + H(+). In terms of biological role, involved in targeting and insertion of nascent membrane proteins into the cytoplasmic membrane. Binds to the hydrophobic signal sequence of the ribosome-nascent chain (RNC) as it emerges from the ribosomes. The SRP-RNC complex is then targeted to the cytoplasmic membrane where it interacts with the SRP receptor FtsY. Interaction with FtsY leads to the transfer of the RNC complex to the Sec translocase for insertion into the membrane, the hydrolysis of GTP by both Ffh and FtsY, and the dissociation of the SRP-FtsY complex into the individual components. In Helicobacter pylori (strain ATCC 700392 / 26695) (Campylobacter pylori), this protein is Signal recognition particle protein.